Reading from the N-terminus, the 123-residue chain is Fluoride-specific ion channel FluC 1 (123 aa).

3 helical membrane passes run 33 to 53, 59 to 79, and 98 to 118; these read TFLI…LFGV, YGTM…TTFS, and VFYL…GAML. Gly73 and Thr76 together coordinate Na(+).

This sequence belongs to the fluoride channel Fluc/FEX (TC 1.A.43) family.

It localises to the cell inner membrane. It catalyses the reaction fluoride(in) = fluoride(out). With respect to regulation, na(+) is not transported, but it plays an essential structural role and its presence is essential for fluoride channel function. Its function is as follows. Fluoride-specific ion channel. Important for reducing fluoride concentration in the cell, thus reducing its toxicity. The chain is Fluoride-specific ion channel FluC 1 from Brucella melitensis biotype 1 (strain ATCC 23456 / CCUG 17765 / NCTC 10094 / 16M).